The primary structure comprises 283 residues: Protein FAM78A (283 aa).

The protein belongs to the FAM78 family.

This is Protein FAM78A (Fam78a) from Mus musculus (Mouse).